The chain runs to 35 residues: Photosystem II reaction center protein T (35 aa).

Residues 3–23 (ALVYTFLLVGTLGIIFFAIFF) form a helical membrane-spanning segment.

It belongs to the PsbT family. As to quaternary structure, PSII is composed of 1 copy each of membrane proteins PsbA, PsbB, PsbC, PsbD, PsbE, PsbF, PsbH, PsbI, PsbJ, PsbK, PsbL, PsbM, PsbT, PsbY, PsbZ, Psb30/Ycf12, at least 3 peripheral proteins of the oxygen-evolving complex and a large number of cofactors. It forms dimeric complexes.

The protein resides in the plastid. Its subcellular location is the chloroplast thylakoid membrane. Found at the monomer-monomer interface of the photosystem II (PS II) dimer, plays a role in assembly and dimerization of PSII. PSII is a light-driven water plastoquinone oxidoreductase, using light energy to abstract electrons from H(2)O, generating a proton gradient subsequently used for ATP formation. This chain is Photosystem II reaction center protein T, found in Chara vulgaris (Common stonewort).